Here is a 388-residue protein sequence, read N- to C-terminus: Chaperone protein DnaJ (388 aa).

The region spanning 5 to 69 is the J domain; it reads DYYDVLGVDK…QKRAQYDQFG (65 aa). The CR-type zinc finger occupies 145 to 227; it reads GKKTDITYTR…CHGQGTVDKK (83 aa). Residues C158, C161, C175, C178, C201, C204, C215, and C218 each coordinate Zn(2+). 4 CXXCXGXG motif repeats span residues 158-165, 175-182, 201-208, and 215-222; these read CPTCDGSG, CDKCHGSG, CDKCGGRG, and CQTCHGQG.

The protein belongs to the DnaJ family. As to quaternary structure, homodimer. Requires Zn(2+) as cofactor.

It is found in the cytoplasm. In terms of biological role, participates actively in the response to hyperosmotic and heat shock by preventing the aggregation of stress-denatured proteins and by disaggregating proteins, also in an autonomous, DnaK-independent fashion. Unfolded proteins bind initially to DnaJ; upon interaction with the DnaJ-bound protein, DnaK hydrolyzes its bound ATP, resulting in the formation of a stable complex. GrpE releases ADP from DnaK; ATP binding to DnaK triggers the release of the substrate protein, thus completing the reaction cycle. Several rounds of ATP-dependent interactions between DnaJ, DnaK and GrpE are required for fully efficient folding. Also involved, together with DnaK and GrpE, in the DNA replication of plasmids through activation of initiation proteins. The sequence is that of Chaperone protein DnaJ from Lactobacillus johnsonii (strain CNCM I-12250 / La1 / NCC 533).